A 7756-amino-acid polypeptide reads, in one-letter code: Linear gramicidin synthase subunit C (7756 aa).

6 Carrier domains span residues 977-1052, 2042-2116, 3557-3632, 4621-4695, 6141-6216, and 7200-7274; these read EPRN…AALQ, APAT…ADSS, APRT…ASLL, APAT…TVTD, APRK…AGLL, and APET…GDSV. An O-(pantetheine 4'-phosphoryl)serine mark is found at S1012, S2077, S3592, S4656, S6176, and S7235.

The protein belongs to the ATP-dependent AMP-binding enzyme family. As to quaternary structure, large multienzyme complex composed of 4 subunits; LgrA, LgrB, LgrC and LgrD. Pantetheine 4'-phosphate is required as a cofactor.

Functionally, activates the 7th to 12th amino acids (Val, D-Val, Trp, D-Leu, Xaa and D-Leu) in linear gramicidin and catalyzes the formation of the peptide bond between them. This enzyme is also responsible for the epimerization of the 8th (D-Val), the 10th (D-Leu) and 12th (D-Leu) amino acids. The 11th (Xaa) amino acid is Trp in linear gramicidin A; Phe in linear gramicidin B and Tyr in linear gramicidin C. The sequence is that of Linear gramicidin synthase subunit C (lgrC) from Brevibacillus parabrevis.